Consider the following 195-residue polypeptide: Ribosome maturation factor RimM (195 aa).

The 91-residue stretch at 101-191 (ADEWYPKDLI…YLTLDPPGGL (91 aa)) folds into the PRC barrel domain.

Belongs to the RimM family. As to quaternary structure, binds ribosomal protein uS19.

Its subcellular location is the cytoplasm. An accessory protein needed during the final step in the assembly of 30S ribosomal subunit, possibly for assembly of the head region. Essential for efficient processing of 16S rRNA. May be needed both before and after RbfA during the maturation of 16S rRNA. It has affinity for free ribosomal 30S subunits but not for 70S ribosomes. The sequence is that of Ribosome maturation factor RimM from Bifidobacterium adolescentis (strain ATCC 15703 / DSM 20083 / NCTC 11814 / E194a).